A 338-amino-acid polypeptide reads, in one-letter code: Fructose-1,6-bisphosphatase class 1 1 (338 aa).

Positions 88, 107, 109, and 110 each coordinate Mg(2+). Substrate-binding positions include 110 to 113 and Asn-196; that span reads DGSS. Glu-268 provides a ligand contact to Mg(2+).

The protein belongs to the FBPase class 1 family. As to quaternary structure, homotetramer. Mg(2+) is required as a cofactor.

It localises to the cytoplasm. It catalyses the reaction beta-D-fructose 1,6-bisphosphate + H2O = beta-D-fructose 6-phosphate + phosphate. It participates in carbohydrate biosynthesis; Calvin cycle. In Bradyrhizobium sp. (strain BTAi1 / ATCC BAA-1182), this protein is Fructose-1,6-bisphosphatase class 1 1.